Reading from the N-terminus, the 435-residue chain is MAEEKSFKYVIVGGGVAAGYAAREFFNQGVKPGELAIISREQVPPYERPALSKGYIHLENKATLPNFYVAAGIGGERQFPQWYKEKGIELILGTEIVKADLAAKTLVSGTGQVFKYQTLLAATGSSVIRLSDFGVPGADAKNIFYLRELEDADYLAYAMETKEKGKAVVVGGGYIGLELGAALKANNLDVTMVYPEPWCMPRLFTAGIASFYEGYYANKGINIVKGTVASGFTTNSNGEVTEVKLKDGRTLEADIVIVGVGGRPIISLFKDQVEEEKGGLKTDGFFKTSLPDVYAIGDVATFPMKLYNEMRRVEHVDHARKSAEQAVKAIKAAEEGNSIPEYDYLPYFYSRAFDLSWQFYGDNVGESVLFGDNDPESPKPKFGSYWIKERKVVGAFLEGGSPEENNAIAKLARAQPSVESLEVLSKEGLSFATNI.

FAD is bound by residues 14–17 (GGVA), Glu-41, Arg-48, Lys-53, Ile-96, and 147–148 (RE). Residues 172-178 (GGYIGLE), Glu-196, Arg-202, and Gly-261 each bind NAD(+). Position 174–178 (174–178 (YIGLE)) interacts with NADP(+). NADP(+) contacts are provided by Arg-202 and Gly-261. Asp-298 contributes to the FAD binding site. 314–315 (EH) is a binding site for NAD(+). 314–315 (EH) provides a ligand contact to NADP(+). An FAD-binding site is contributed by Val-316. Residue Arg-320 coordinates L-ascorbate. Tyr-349 lines the FAD pocket. Tyr-349 is a binding site for NAD(+). Position 349 (Tyr-349) interacts with NADP(+). An L-ascorbate-binding site is contributed by Arg-351. Ser-417 is subject to Phosphoserine.

It belongs to the FAD-dependent oxidoreductase family. Requires FAD as cofactor.

It localises to the cytoplasm. The catalysed reaction is 2 monodehydro-L-ascorbate radical + NADH + H(+) = 2 L-ascorbate + NAD(+). Functionally, catalyzes the conversion of monodehydroascorbate to ascorbate, oxidizing NADH in the process. The sequence is that of Monodehydroascorbate reductase 2 from Arabidopsis thaliana (Mouse-ear cress).